The sequence spans 400 residues: MKEKTIIIVGGGQAAAMAAASLRQQGFTGELHLFSDERHLPYERPPLSKSMLLEDSPQLQQVLPANWWQENNVHLHSGVTIKTLGRDTRELVLTNGESWHWDQLFIATGAAARPLPLLDALGERCFTLRHAGDAARLREVLQPERSVVIVGAGTIGLELAASATQRRCKVTVIELAATVMGRNAPPPVQRYLLQRHQQAGVRILLNNAIEHVVDGEKVELTLQSGETLQADVVIYGIGISANEQLAREANLDTANGIVIDEACRTCDPAIFAGGDVAITRLDNGALHRCESWENANNQAQIAAAAMLGLPLPLLPPPWFWSDQYSDNLQFIGDMRGDDWLCRGNPETQKAIWFNLQNGVLIGAVTLNQGREIRPIRKWIQSGKTFDAKLLIDENIALKSL.

5–36 (TIIIVGGGQAAAMAAASLRQQGFTGELHLFSD) contacts FAD. 146 to 174 (SVVIVGAGTIGLELAASATQRRCKVTVIE) lines the NAD(+) pocket.

Belongs to the bacterial ring-hydroxylating dioxygenase ferredoxin reductase family. This dioxygenase system consists of four proteins: the two subunits of the hydroxylase component (HcaE and HcaF), a ferredoxin (HcaC) and a ferredoxin reductase (HcaD). The cofactor is FAD.

The catalysed reaction is 2 reduced [2Fe-2S]-[ferredoxin] + NAD(+) + H(+) = 2 oxidized [2Fe-2S]-[ferredoxin] + NADH. It functions in the pathway aromatic compound metabolism; 3-phenylpropanoate degradation. Functionally, part of the multicomponent 3-phenylpropionate dioxygenase, that converts 3-phenylpropionic acid (PP) and cinnamic acid (CI) into 3-phenylpropionate-dihydrodiol (PP-dihydrodiol) and cinnamic acid-dihydrodiol (CI-dihydrodiol), respectively. The sequence is that of 3-phenylpropionate/cinnamic acid dioxygenase ferredoxin--NAD(+) reductase component from Escherichia coli (strain 55989 / EAEC).